Here is a 295-residue protein sequence, read N- to C-terminus: Transcription factor MYB34 (295 aa).

HTH myb-type domains are found at residues 9–61 (EEGI…ANYL) and 62–116 (RPDI…KKRL). 2 DNA-binding regions (H-T-H motif) span residues 37-61 (WRTL…ANYL) and 89-112 (WAAI…NTNL).

As to quaternary structure, can form complexes with MYC2, MYC3 or MYC4. In terms of tissue distribution, expressed in trichomes.

It is found in the nucleus. Transcription factor involved in tryptophan gene activation and in indole-3-acetic acid (IAA) and indolic glucosinolates (IG) biosynthesis. Acts as a direct transcriptional activator of both Trp synthesis genes and Trp secondary metabolism genes. This chain is Transcription factor MYB34 (MYB34), found in Arabidopsis thaliana (Mouse-ear cress).